The following is a 709-amino-acid chain: MPYLDHAGSTLPSKIQLEEVAKQQSQLILANPHSHHATAVKTKQIVNSARLRILQYFNTTSDDYFVVLTNNTTHGLKIVAENFKFGQKTHSILNIASVLHGGSSNLGYLYDSHHSVVGLRHVVNGKVNSISCVNEESILEHEIPDVEHSLFVLTAMSNFCGKKYSLESVHRLQEKGWAVCLDAASFVSSSALDLSQQRPNFIAFSFYKIFGYPTGIGALLVRKDSAHLIEKTSFAGGTVQSVDEMSMFFVLREFERAFEEGTLNYYGIAQLQKGFEEIERCGGISSIRNLTHHLCKNALYMLKSKKHPNGRPVVEIYSQSEQFENPDKQGPIVAFNLKRPDGGYYGYTEVEKMCAIFGIELRTGCFCNIGACKKYLGITSEMIQENMSKGKRCGDEIDLINGTPTGAIRISFGRTSTEHDITALEQMIDTCFTEGEHQAQSKPDPMNIESYSPTVVNLFSFPIKSVGSVGRKRYELTARGFKNDREFLIVNDDVTLNLKTHPELCMLTATIVDDDQLLIQTFDQNENLVLPMSLSLKDNGAKLVCKNTIATMDCGDKVGKWLDNALDRQNCRLLRVAEDSKKNFVNDSPFLLINEASVYMLSRYINMEVREILTRFRSNIVVRGLPPFIEDTAKRLSIENLEFEVVDKCTRCEMICVDPMTGEKDPSLLLALRDYRNKQKMTFGIYIRQTNFESGQYLESGMSVNFSTD.

Position 208 is an N6-(pyridoxal phosphate)lysine (Lys208). Cys367 is an active-site residue. The MOSC domain maps to 563-707; the sequence is DNALDRQNCR…LESGMSVNFS (145 aa).

This sequence belongs to the class-V pyridoxal-phosphate-dependent aminotransferase family. MOCOS subfamily. It depends on pyridoxal 5'-phosphate as a cofactor.

The catalysed reaction is Mo-molybdopterin + L-cysteine + AH2 = thio-Mo-molybdopterin + L-alanine + A + H2O. Its pathway is cofactor biosynthesis; molybdopterin biosynthesis. Its function is as follows. Sulfurates the molybdenum cofactor. Sulfation of molybdenum is essential for xanthine dehydrogenase (XDH) and aldehyde oxidase (ADO) enzymes in which molybdenum cofactor is liganded by 1 oxygen and 1 sulfur atom in active form. The sequence is that of Molybdenum cofactor sulfurase from Caenorhabditis elegans.